A 399-amino-acid polypeptide reads, in one-letter code: Glutathione-independent formaldehyde dehydrogenase (399 aa).

Residue C47 coordinates Zn(2+). Positions 48, 49, and 52 each coordinate NAD(+). Residues H68, C98, C101, C104, C112, and D170 each coordinate Zn(2+). 10 residues coordinate NAD(+): V198, D218, R223, V263, R268, H270, P300, L302, G337, and T339.

This sequence belongs to the zinc-containing alcohol dehydrogenase family. In terms of assembly, homotetramer. Zn(2+) serves as cofactor.

It catalyses the reaction formaldehyde + NAD(+) + H2O = formate + NADH + 2 H(+). It carries out the reaction acetaldehyde + NAD(+) + H2O = acetate + NADH + 2 H(+). The catalysed reaction is 2 formaldehyde + H2O = methanol + formate + H(+). With respect to regulation, inactivated by bipyridine and p-chloromercuribenzoate. Its function is as follows. Dehydrogenase that catalyzes the NAD(+)-dependent oxidation of formaldehyde and acetaldehyde, and, to a lesser extent, long-chain alcohols, but is inactive against propionaldehyde, butyraldehyde, methanol and ethanol. Can also catalyze the dismutation of a wide range of aldehydes such as formaldehyde. The polypeptide is Glutathione-independent formaldehyde dehydrogenase (Pseudomonas putida (Arthrobacter siderocapsulatus)).